The following is a 400-amino-acid chain: Tryptophan synthase beta chain (400 aa).

The residue at position 90 (Lys90) is an N6-(pyridoxal phosphate)lysine.

It belongs to the TrpB family. As to quaternary structure, tetramer of two alpha and two beta chains. Pyridoxal 5'-phosphate serves as cofactor.

It catalyses the reaction (1S,2R)-1-C-(indol-3-yl)glycerol 3-phosphate + L-serine = D-glyceraldehyde 3-phosphate + L-tryptophan + H2O. It participates in amino-acid biosynthesis; L-tryptophan biosynthesis; L-tryptophan from chorismate: step 5/5. Functionally, the beta subunit is responsible for the synthesis of L-tryptophan from indole and L-serine. The polypeptide is Tryptophan synthase beta chain (Alkaliphilus metalliredigens (strain QYMF)).